Here is a 589-residue protein sequence, read N- to C-terminus: Proline--tRNA ligase (589 aa).

Belongs to the class-II aminoacyl-tRNA synthetase family. ProS type 1 subfamily. Homodimer.

The protein localises to the cytoplasm. The enzyme catalyses tRNA(Pro) + L-proline + ATP = L-prolyl-tRNA(Pro) + AMP + diphosphate. Functionally, catalyzes the attachment of proline to tRNA(Pro) in a two-step reaction: proline is first activated by ATP to form Pro-AMP and then transferred to the acceptor end of tRNA(Pro). As ProRS can inadvertently accommodate and process non-cognate amino acids such as alanine and cysteine, to avoid such errors it has two additional distinct editing activities against alanine. One activity is designated as 'pretransfer' editing and involves the tRNA(Pro)-independent hydrolysis of activated Ala-AMP. The other activity is designated 'posttransfer' editing and involves deacylation of mischarged Ala-tRNA(Pro). The misacylated Cys-tRNA(Pro) is not edited by ProRS. This Nocardioides sp. (strain ATCC BAA-499 / JS614) protein is Proline--tRNA ligase.